Here is a 155-residue protein sequence, read N- to C-terminus: NADPH-dependent 7-cyano-7-deazaguanine reductase (155 aa).

Polar residues predominate over residues 1–20 (MMPNTDVSSLSMLGQQTETA). The segment at 1–26 (MMPNTDVSSLSMLGQQTETAKSPEEA) is disordered. Cys53 functions as the Thioimide intermediate in the catalytic mechanism. Asp60 acts as the Proton donor in catalysis. Substrate contacts are provided by residues 75–77 (VES) and 94–95 (HE).

It belongs to the GTP cyclohydrolase I family. QueF type 1 subfamily.

The protein localises to the cytoplasm. The enzyme catalyses 7-aminomethyl-7-carbaguanine + 2 NADP(+) = 7-cyano-7-deazaguanine + 2 NADPH + 3 H(+). It functions in the pathway tRNA modification; tRNA-queuosine biosynthesis. Its function is as follows. Catalyzes the NADPH-dependent reduction of 7-cyano-7-deazaguanine (preQ0) to 7-aminomethyl-7-deazaguanine (preQ1). This is NADPH-dependent 7-cyano-7-deazaguanine reductase from Rhizobium etli (strain CIAT 652).